The chain runs to 862 residues: MLSWVLLAWAVACSALAGASRLTPSVLPLVVRNPYLSTWLADARHEPWSSWPIFWTGQHMGMSIMAHVPSTGNTYPLLGRPHDSLGPNNPNNGCFLGSKYDASTTNMTYLIQPEGKHLAGESVKITITFLSPITPTSTLRQSIPAGYVTIRVEGNMNVNIYMDMNGEWVTGDRGSSLIWKMDNIVDTGKGESLYQWQVSRKTEQLFTEFQDRAEWGMLHFLAPQGVRYESGTSMLLRTRFARTGVLQNRNDERFRTVMDEEPVFAYSKAFNLNGTDDEPNIEAIHDEVTFTIAHTQDPVVQFASARGLTLMKPLWESYFPDVKSLLNFHYFDLDKARILAHRYSNQLARDAQLSAAEDYVDVVALTARQVLGATSFSGTSDNPLLFLKEISSNGNCQTVDVIFPSFPFFLYTNPRWLAYLLEPLIEHMLSGQYPNNYSMHDLGAHFPNMTGHPDGKDEYMPVEECGNMLIMGLSIVNSLRFPPEANTTAPWYPGTLEARDAEPDVVGLFPLRDLQTVGGIDRLDSVWGVGPDATNLARKWVEKSYRLWRQWTGYLVEFSLEPHNQLSTDDFAGWLALQTNLALKGIVGINAMSEMSRFVGKTDDYKYFKNISDTYITKWEGFGFSRDGTHAKLSYDWYGSWTTLYNMFADALLCFHLDGTEYDTHPRTLDDQEPIAPPPGKTGFIPRRVYEKQSKWYANVRQKYGLPLDSRHLYTKSDWEFFSMAVSSPSVRSEILQSYAKWVNETSTDHPLTDLYKTEEDGGYPGPNFFARPVVGGHFAFLALEKACNGKATDGLKFLDDKDNNSPEDIPEDNVHDGDADNEDSQSPIQDSDGSEVKAGDQAQFPIQDMDDSQMTIVNEND.

The first 19 residues, 1-19 (MLSWVLLAWAVACSALAGA), serve as a signal peptide directing secretion. N-linked (GlcNAc...) asparagine glycans are attached at residues asparagine 106, asparagine 273, asparagine 436, asparagine 448, asparagine 486, asparagine 610, and asparagine 744. Positions 798–862 (FLDDKDNNSP…SQMTIVNEND (65 aa)) are disordered. The segment covering 853–862 (SQMTIVNEND) has biased composition (polar residues).

It belongs to the fungal glutaminase gtaA family.

Its subcellular location is the secreted. The enzyme catalyses L-glutamine + H2O = L-glutamate + NH4(+). Glutaminase catalyzes the hydrolysis of glutamine to glutamic acid and plays a key role in nitrogen metabolism. This is Probable glutaminase ARB_05535/05536 from Arthroderma benhamiae (strain ATCC MYA-4681 / CBS 112371) (Trichophyton mentagrophytes).